The sequence spans 1819 residues: Gamma-tubulin complex component 6 (1819 aa).

Disordered stretches follow at residues 810–889 (SEAH…GARP), 929–951 (LPPS…PQEY), and 1000–1023 (RETL…QPTE). 9 repeat units span residues 1027-1053 (GQVS…WNTH), 1054-1080 (GHVS…WNTH), 1081-1107 (GHVS…WNIH), 1108-1134 (GHVS…WNTH), 1135-1161 (GHVS…WNTH), 1162-1188 (GHVS…WNTH), 1189-1215 (GHVS…WNTH), 1216-1242 (GHVS…CNTH), and 1243-1269 (GHVS…WNTH). The 9 X 27 AA tandem repeats stretch occupies residues 1027-1269 (GQVSGGGLPT…VSTRPRWNTH (243 aa)). The segment at 1271–1412 (PIPPPHMVLG…EAEASAAEAQ (142 aa)) is disordered. Polar residues predominate over residues 1297-1314 (PPGHTSQSALSLGAQSTV). Over residues 1321-1335 (LPVEVGPSLSSPSSG) the composition is skewed to low complexity. Residues 1384–1398 (WPLNSQEDTAAQSSP) are compositionally biased toward polar residues.

The protein belongs to the TUBGCP family. Component of the gamma-tubulin ring complex (gTuRC) consisting of TUBGCP2, TUBGCP3, TUBGCP4, TUBGCP5 and TUBGCP6 and gamma-tubulin TUBG1 or TUBG2. TUBGCP2, TUBGCP3, TUBGCP4, TUBGCP5 and TUBGCP6 assemble in a 5:5:2:1:1 stoichiometry; each is associated with a gamma-tubulin, thereby arranging 14 gamma-tubulins in a helical manner. Gamma-tubulin at the first position is blocked by TUBGCP3 at the last position, allowing 13 protafilaments to grow into a microtubule. The gTuRC (via TUBGCP3 and TUBGCP6) interacts with ACTB and MZT1; the interactions form a luminal bridge that stabilizes the initial structure during complex assembly. The gTuRC (via TUBGCP2) interacts with MZT2A/MZT2B and CDK5RAP2 (via CM1 motif); the interactions play a role in gTuRC activation.

Its subcellular location is the cytoplasm. The protein resides in the cytoskeleton. It localises to the microtubule organizing center. The protein localises to the centrosome. In terms of biological role, component of the gamma-tubulin ring complex (gTuRC) which mediates microtubule nucleation. The gTuRC regulates the minus-end nucleation of alpha-beta tubulin heterodimers that grow into microtubule protafilaments, a critical step in centrosome duplication and spindle formation. The polypeptide is Gamma-tubulin complex component 6 (TUBGCP6) (Homo sapiens (Human)).